The chain runs to 753 residues: Nigerose phosphorylase (753 aa).

348–349 (WD) is a substrate binding site. Residue E490 is the Proton donor of the active site. Residue 604–605 (KQ) participates in substrate binding.

Belongs to the glycosyl hydrolase 65 family. In terms of assembly, homodimer.

The protein localises to the cytoplasm. The enzyme catalyses nigerose + phosphate = beta-D-glucose 1-phosphate + D-glucose. Does not require divalent metal ions. Its function is as follows. Catalyzes the reversible phosphorolysis of nigerose. Also shows a weak activity on kojibiose. The polypeptide is Nigerose phosphorylase (Lachnoclostridium phytofermentans (strain ATCC 700394 / DSM 18823 / ISDg) (Clostridium phytofermentans)).